Here is a 64-residue protein sequence, read N- to C-terminus: Large ribosomal subunit protein bL33 (64 aa).

Belongs to the bacterial ribosomal protein bL33 family.

In Synechococcus sp. (strain JA-3-3Ab) (Cyanobacteria bacterium Yellowstone A-Prime), this protein is Large ribosomal subunit protein bL33.